The chain runs to 154 residues: Cytochrome c-type biogenesis protein CcmE (154 aa).

The Cytoplasmic segment spans residues 1-8 (MHPQRKQR). A helical; Signal-anchor for type II membrane protein transmembrane segment spans residues 9–29 (LMIVLFIVVFSSLAVGLIAYA). The Periplasmic segment spans residues 30 to 154 (LRENINLFYP…ATCGGLNYGA (125 aa)). Heme contacts are provided by His-124 and Tyr-128.

This sequence belongs to the CcmE/CycJ family.

Its subcellular location is the cell inner membrane. Functionally, heme chaperone required for the biogenesis of c-type cytochromes. Transiently binds heme delivered by CcmC and transfers the heme to apo-cytochromes in a process facilitated by CcmF and CcmH. In Cellvibrio japonicus (strain Ueda107) (Pseudomonas fluorescens subsp. cellulosa), this protein is Cytochrome c-type biogenesis protein CcmE.